A 133-amino-acid polypeptide reads, in one-letter code: Thioredoxin-2, mitochondrial (133 aa).

Residues 1–29 (MRGFIANSLKPHMRSFALRRSFTSSRILR) constitute a mitochondrion transit peptide. The Thioredoxin domain maps to 30–133 (KVNAVESFGD…LSSLLAKYQE (104 aa)). Residues Cys-59 and Cys-62 each act as nucleophile in the active site. Cysteines 59 and 62 form a disulfide.

This sequence belongs to the thioredoxin family. In terms of assembly, interacts with arg3.

Its subcellular location is the mitochondrion. Disulfide reductase which serves multiple functions in mitochondria, protecting mitochondrial components against thiol-oxidative damage as a thiol-disulfide oxidoreductase, and supporting urea cycle and respiration in mitochondria in a manner independent of active site thiols. The chain is Thioredoxin-2, mitochondrial (trx2) from Schizosaccharomyces pombe (strain 972 / ATCC 24843) (Fission yeast).